Here is a 454-residue protein sequence, read N- to C-terminus: Aminodeoxychorismate synthase component 1 (454 aa).

Residues S37, 44 to 47 (YNRF), and 241 to 243 (PFS) each bind L-tryptophan. E259 functions as the Proton donor in the catalytic mechanism. The active-site N6-(4-deoxychorismate)-lysine intermediate is the K275.

The protein belongs to the anthranilate synthase component I family. Monomer. Heterodimer consisting of two non-identical subunits: a glutamine amidotransferase subunit (PabA) and a aminodeoxychorismate synthase subunit (PabB). Requires Mg(2+) as cofactor.

It catalyses the reaction chorismate + L-glutamine = 4-amino-4-deoxychorismate + L-glutamate. It participates in cofactor biosynthesis; tetrahydrofolate biosynthesis; 4-aminobenzoate from chorismate: step 1/2. Its function is as follows. Part of a heterodimeric complex that catalyzes the two-step biosynthesis of 4-amino-4-deoxychorismate (ADC), a precursor of p-aminobenzoate (PABA) and tetrahydrofolate. In the first step, a glutamine amidotransferase (PabA) generates ammonia as a substrate that, along with chorismate, is used in the second step, catalyzed by aminodeoxychorismate synthase (PabB) to produce ADC. This chain is Aminodeoxychorismate synthase component 1 (pabB), found in Salmonella typhimurium (strain LT2 / SGSC1412 / ATCC 700720).